Reading from the N-terminus, the 373-residue chain is Chaperone protein DnaJ (373 aa).

The J domain occupies 4-68 (NYYQILGVSK…QKRAAYDRLG (65 aa)). The CR-type zinc-finger motif lies at 136 to 214 (GIEKNINFSS…CHGMGRYHKQ (79 aa)). The Zn(2+) site is built by Cys149, Cys152, Cys166, Cys169, Cys188, Cys191, Cys202, and Cys205. CXXCXGXG motif repeat units follow at residues 149–156 (CNTCHGSG), 166–173 (CDACSGVG), 188–195 (CHKCQGNG), and 202–209 (CKKCHGMG).

This sequence belongs to the DnaJ family. In terms of assembly, homodimer. Requires Zn(2+) as cofactor.

The protein resides in the cytoplasm. Participates actively in the response to hyperosmotic and heat shock by preventing the aggregation of stress-denatured proteins and by disaggregating proteins, also in an autonomous, DnaK-independent fashion. Unfolded proteins bind initially to DnaJ; upon interaction with the DnaJ-bound protein, DnaK hydrolyzes its bound ATP, resulting in the formation of a stable complex. GrpE releases ADP from DnaK; ATP binding to DnaK triggers the release of the substrate protein, thus completing the reaction cycle. Several rounds of ATP-dependent interactions between DnaJ, DnaK and GrpE are required for fully efficient folding. Also involved, together with DnaK and GrpE, in the DNA replication of plasmids through activation of initiation proteins. The chain is Chaperone protein DnaJ from Rickettsia rickettsii (strain Sheila Smith).